A 205-amino-acid polypeptide reads, in one-letter code: Regulator of G-protein signaling 4 (205 aa).

Residues Cys-2, Cys-12, and Cys-95 are each lipidated (S-palmitoyl cysteine). In terms of domain architecture, RGS spans 62–178; that stretch reads SLENLISHEC…LKSRFYLDLV (117 aa).

In terms of processing, palmitoylated on Cys-2 and/or Cys-12. Phosphorylated by cyclic GMP-dependent protein kinase.

Functionally, inhibits signal transduction by increasing the GTPase activity of G protein alpha subunits thereby driving them into their inactive GDP-bound form. Activity on G(z)-alpha is inhibited by phosphorylation of the G-protein. Activity on G(z)-alpha and G(i)-alpha-1 is inhibited by palmitoylation of the G-protein. The sequence is that of Regulator of G-protein signaling 4 (RGS4) from Pongo abelii (Sumatran orangutan).